A 412-amino-acid chain; its full sequence is UPF0754 membrane protein syc0451_d (412 aa).

A run of 2 helical transmembrane segments spans residues 8–28 and 390–410; these read LWLL…DLAI and IGGV…VWSL.

Belongs to the UPF0754 family.

The protein resides in the cell inner membrane. This is UPF0754 membrane protein syc0451_d from Synechococcus sp. (strain ATCC 27144 / PCC 6301 / SAUG 1402/1) (Anacystis nidulans).